A 475-amino-acid polypeptide reads, in one-letter code: MTPSAKRRTLNTHYFMPPHVRVVELMTSGNTAPEIMSLLVDRMKTVGLKPFVAKRESTGFIQNRVWASIKREMLHVVAEGIVDAQTADDIFVETIVRPGTRPFAAMDYVGLDTVANIERTYAQERHLDTTYTVDYLQREFIDVGKLGIKSNKGGFYPPSTAADAVSTKPRIFVLDNGLSGQIDNLKQGKILEYSFEGEYIRTVFKDQYLPDGIAVSQEENVLFWTCMGSPGQKDGMIYAGKLDGNDIRPLIQQGIVHTPKQIVIDEANKKLYFTDREGLCIWRCDKDGSNLEQVVVTGDNNNECDRRDATRWCVGITFSHTLGKIFWTQKGASKGWQGRIFSANMTIPPGETAAHRKDKVCLLEGLAEPIDLDFHESTKTLYWTDRGEMPFGNTLNRLRFDDRGYALHTDSTPHLKHEIIARKFHEAIGLKIDARNEHVYVADLGGSICRCKLDGSDKVRLVFQEDRAWTGVALA.

99 to 104 provides a ligand contact to NAD(+); the sequence is GTRPFA. CoA is bound at residue Lys149. Asn245 serves as a coordination point for NAD(+).

The protein belongs to the 3-hydroxyacyl-CoA dehydrogenase family.

It participates in mycotoxin biosynthesis. Functionally, 3-hydroxyacyl-CoA dehydrogenase-like protein; part of the Tox1A locus, one of the 2 loci that mediate the biosynthesis of T-toxin, a family of linear polyketides 37 to 45 carbons in length, of which the major component is 41 carbons, and which leads to high virulence to maize. One of the PKSs (PKS1 or PKS2) could synthesize a precursor, used subsequently by the other PKS as starter unit, to add additional carbons. Variability in the length of the final carbon backbone C35-47 could be achieved by varying the number of condensation cycles, or use of different starter or extender units or might be due to decarboxylation of the penultimate product, catalyzed by DEC1. Additional proteins are required for the biosynthesis of T-toxin, including oxidoreductases RED1, RED2, RED3, LAM1 and OXI1, as well as esterase TOX9. The sequence is that of 3-hydroxyacyl-CoA dehydrogenase-like protein LAM1 from Cochliobolus heterostrophus (strain C4 / ATCC 48331 / race T) (Southern corn leaf blight fungus).